The chain runs to 296 residues: Glycine--tRNA ligase alpha subunit (296 aa).

The protein belongs to the class-II aminoacyl-tRNA synthetase family. Tetramer of two alpha and two beta subunits.

Its subcellular location is the cytoplasm. The catalysed reaction is tRNA(Gly) + glycine + ATP = glycyl-tRNA(Gly) + AMP + diphosphate. The sequence is that of Glycine--tRNA ligase alpha subunit from Prochlorococcus marinus (strain SARG / CCMP1375 / SS120).